The chain runs to 583 residues: Transmembrane protein 108 (583 aa).

Residues 7–27 (ALYCQLLSFLLTLALTEALVF) form a helical membrane-spanning segment. The segment at 31 to 176 (EPSPRESLQV…ATIRRPPRPP (146 aa)) is interacts with SH3GL2. Disordered stretches follow at residues 71–360 (VTPT…GVFA) and 376–404 (VPSE…STVS). Composition is skewed to polar residues over residues 80-93 (PSSQ…TTTP) and 100-122 (PTNT…SLST). Over residues 177 to 187 (GSSRKGAGSSP) the composition is skewed to low complexity. The interval 180–413 (RKGAGSSPRP…SQAEEKAVAT (234 aa)) is interacts with DST (isoform 1). 3 stretches are compositionally biased toward polar residues: residues 251-273 (YSSS…SWVP), 310-319 (ASGTPASQQR), and 333-357 (DGSS…TNSG). Residues 477-497 (IAWVILAISVPISSCSVLLTV) traverse the membrane as a helical segment. The segment at 498-583 (CCLRRKKKPA…FVGNDQVSEI (86 aa)) is interaction with CYFIP2.

In terms of assembly, interacts with DST (isoform 1). Interacts with SH3GL2. Interacts (via N-terminus) with CYFIP1 and CYFIP2; the interactions associate TMEM108 with the WAVE1 complex. Glycosylated.

The protein localises to the membrane. The protein resides in the postsynaptic density. It localises to the endosome membrane. It is found in the cell projection. Its subcellular location is the axon. The protein localises to the dendrite. The protein resides in the early endosome. In terms of biological role, transmembrane protein required for proper cognitive functions. Involved in the development of dentate gyrus (DG) neuron circuitry, is necessary for AMPA receptors surface expression and proper excitatory postsynaptic currents of DG granule neurons. Regulates the organization and stability of the microtubule network of sensory neurons to allow axonal transport. Through the interaction with DST, mediates the docking of the dynein/dynactin motor complex to vesicle cargos for retrograde axonal transport. In hippocampal neurons, required for BDNF-dependent dendrite outgrowth. Cooperates with SH3GL2 and recruits the WAVE1 complex to facilitate actin-dependent BDNF:NTRK2 early endocytic trafficking and mediate signaling from early endosomes. The protein is Transmembrane protein 108 of Bos taurus (Bovine).